Reading from the N-terminus, the 382-residue chain is Probable G-protein coupled receptor 132 (382 aa).

Residues 1 to 42 (MRSEPTNAAGNTTLGVTSVLQSTSVPSSETCHVSYEESRVVL) lie on the Extracellular side of the membrane. An N-linked (GlcNAc...) asparagine glycan is attached at N11. A helical transmembrane segment spans residues 43–65 (VVVYSAVCLLGLPANCLTAWLTL). Topologically, residues 66–76 (LQVLQRNVLAV) are cytoplasmic. A helical membrane pass occupies residues 77-99 (YLFCLSLCELLYISTVPLWIIYI). Topologically, residues 100 to 113 (QNQHKWNLGPQACK) are extracellular. C112 and C184 are disulfide-bonded. A helical membrane pass occupies residues 114–135 (VTAYIFFCNIYISILLLCCISC). Topologically, residues 136–155 (DRYMAVVYALESRGHRHQRT) are cytoplasmic. Residues 156 to 175 (AVTISACVILLVGLVNYPVF) traverse the membrane as a helical segment. At 176–198 (DMKVEKSFCFEPLRMNSKIAGYH) the chain is on the extracellular side. Residues 199–221 (YLRFTFGFAIPLGILAFTNHQIF) traverse the membrane as a helical segment. At 222–241 (RSIKLSDSLSAAQKNKVKRS) the chain is on the cytoplasmic side. Residues 242-261 (AIAVVTIFLVCFAPYHVVLL) form a helical membrane-spanning segment. Residues 262 to 286 (VKAASFSFYQGDMDAVCAFESRLYT) lie on the Extracellular side of the membrane. Residues 287 to 309 (VSMVFLCLSTVNSVADPIIYVLG) form a helical membrane-spanning segment. Over 310–382 (TDHSRQEVSR…SPERLPEELC (73 aa)) the chain is Cytoplasmic.

This sequence belongs to the G-protein coupled receptor 1 family. As to expression, highly expressed in hematopoietic tissues rich in lymphocytes like spleen and thymus. Weakly expressed in heart and lung. Highly expressed in infiltrating macrophages within atherosclerotic lesions.

It localises to the cell membrane. Its function is as follows. May be a receptor for oxidized free fatty acids derived from linoleic and arachidonic acids such as 9-hydroxyoctadecadienoic acid (9-HODE). Activates a G alpha protein, most likely G alpha(q). May be involved in apoptosis. Functions at the G2/M checkpoint to delay mitosis. May function as a sensor that monitors the oxidative states and mediates appropriate cellular responses such as secretion of paracrine signals and attenuation of proliferation. May mediate ths accumulation of intracellular inositol phosphates at acidic pH through proton-sensing activity. This Mus musculus (Mouse) protein is Probable G-protein coupled receptor 132 (Gpr132).